Reading from the N-terminus, the 303-residue chain is MSFTVAVKEEILGQHHLSWHELSAIIKMSGNIGLSTSGLTLSVVTENAKLARHLYESFLHFYEIKSEIRHHQRSNLRKNRVYTVFTDEKVQDLLSDLHLADSFFGLETGIDEAILSDEEAGRAYLCGAFLANGSIRDPESGKYQLEISSVYLDHAQGIASLLQQFLLDAKVLERKKGAVTYLQRAEDIMDFLIVIGAMQARDDFERVKILRETRNDLNRANNAETANIARTVSASMKTINNISKIKDIMGLENLPVDLQEVAQLRIQHPDYSIQQLADSLSTPLTKSGVNHRLRKINKIADEL.

Residues 272–303 constitute a DNA-binding region (H-T-H motif); the sequence is SIQQLADSLSTPLTKSGVNHRLRKINKIADEL.

This sequence belongs to the WhiA family.

Its function is as follows. Involved in cell division and chromosome segregation. The protein is Probable cell division protein WhiA of Streptococcus pneumoniae (strain Hungary19A-6).